The primary structure comprises 245 residues: Platelet-derived growth factor subunit B (245 aa).

A signal peptide spans 1 to 20 (MNRCWALFLSLCCYLRLVSA). Residues 21–81 (EGDPIPEELY…ELESLSRGRR (61 aa)) constitute a propeptide, removed in mature form. A glycan (N-linked (GlcNAc...) asparagine) is linked at asparagine 63. Intrachain disulfides connect cysteine 101–cysteine 145, cysteine 134–cysteine 182, and cysteine 138–cysteine 184. The propeptide at 195 to 245 (RSPGSSQEQRARTPQTRVTIRTVRVRRPPKGKHQKFKHTHDKKALKETLGA) is removed in mature form. The span at 220 to 235 (RRPPKGKHQKFKHTHD) shows a compositional bias: basic residues. The disordered stretch occupies residues 220-245 (RRPPKGKHQKFKHTHDKKALKETLGA). A compositionally biased stretch (basic and acidic residues) spans 236-245 (KKALKETLGA).

The protein belongs to the PDGF/VEGF growth factor family. In terms of assembly, antiparallel homodimer; disulfide-linked. Antiparallel heterodimer with PDGFA; disulfide-linked. The PDGFB homodimer interacts with PDGFRA and PDGFRB homodimers, and with heterodimers formed by PDGFRA and PDGFRB. The heterodimer composed of PDGFA and PDGFB interacts with PDGFRB homodimers, and with heterodimers formed by PDGFRA and PDGFRB. Interacts with XLKD1. Interacts with LRP1. Interacts with SORL1 (via the N-terminal ectodomain). Interacts with CD82; this interaction inhibits PDGFB-mediated signaling pathway.

It localises to the secreted. Functionally, growth factor that plays an essential role in the regulation of embryonic development, cell proliferation, cell migration, survival and chemotaxis. Potent mitogen for cells of mesenchymal origin. Required for normal proliferation and recruitment of pericytes and vascular smooth muscle cells in the central nervous system, skin, lung, heart and placenta. Required for normal blood vessel development, and for normal development of kidney glomeruli. Plays an important role in wound healing. Signaling is modulated by the formation of heterodimers with PDGFA. This is Platelet-derived growth factor subunit B (PDGFB) from Felis catus (Cat).